We begin with the raw amino-acid sequence, 324 residues long: Delta-aminolevulinic acid dehydratase (324 aa).

Residues Cys-120, Cys-122, and Cys-130 each contribute to the Zn(2+) site. Lys-195 acts as the Schiff-base intermediate with substrate in catalysis. Arg-205 and Arg-216 together coordinate 5-aminolevulinate. Mg(2+) is bound at residue Glu-232. Residue Lys-247 is the Schiff-base intermediate with substrate of the active site. 2 residues coordinate 5-aminolevulinate: Ser-273 and Tyr-312.

It belongs to the ALAD family. As to quaternary structure, homooctamer. Zn(2+) serves as cofactor.

It catalyses the reaction 2 5-aminolevulinate = porphobilinogen + 2 H2O + H(+). It participates in porphyrin-containing compound metabolism; protoporphyrin-IX biosynthesis; coproporphyrinogen-III from 5-aminolevulinate: step 1/4. Its activity is regulated as follows. Allosteric enzyme. Stimulated by magnesium ions. Catalyzes an early step in the biosynthesis of tetrapyrroles. Binds two molecules of 5-aminolevulinate per subunit, each at a distinct site, and catalyzes their condensation to form porphobilinogen. This Escherichia coli (strain K12) protein is Delta-aminolevulinic acid dehydratase (hemB).